Reading from the N-terminus, the 100-residue chain is Aspartyl/glutamyl-tRNA(Asn/Gln) amidotransferase subunit C (100 aa).

The protein belongs to the GatC family. As to quaternary structure, heterotrimer of A, B and C subunits.

It carries out the reaction L-glutamyl-tRNA(Gln) + L-glutamine + ATP + H2O = L-glutaminyl-tRNA(Gln) + L-glutamate + ADP + phosphate + H(+). The enzyme catalyses L-aspartyl-tRNA(Asn) + L-glutamine + ATP + H2O = L-asparaginyl-tRNA(Asn) + L-glutamate + ADP + phosphate + 2 H(+). Functionally, allows the formation of correctly charged Asn-tRNA(Asn) or Gln-tRNA(Gln) through the transamidation of misacylated Asp-tRNA(Asn) or Glu-tRNA(Gln) in organisms which lack either or both of asparaginyl-tRNA or glutaminyl-tRNA synthetases. The reaction takes place in the presence of glutamine and ATP through an activated phospho-Asp-tRNA(Asn) or phospho-Glu-tRNA(Gln). This Dictyoglomus turgidum (strain DSM 6724 / Z-1310) protein is Aspartyl/glutamyl-tRNA(Asn/Gln) amidotransferase subunit C.